The primary structure comprises 363 residues: Protein-arginine kinase (363 aa).

The Phosphagen kinase C-terminal domain occupies 24–254; the sequence is IVLSSRIRLA…AQLIEQERSA (231 aa). Residues 27–31, His92, Arg125, 176–180, and 207–212 each bind ATP; these read SSRIR, RASVM, and RGIYGE. The RDXXRA motif of the pArg binding pocket involved in allosteric regulation signature appears at 337–342; sequence RDIRRA.

The protein belongs to the ATP:guanido phosphotransferase family.

The enzyme catalyses L-arginyl-[protein] + ATP = N(omega)-phospho-L-arginyl-[protein] + ADP + H(+). Its activity is regulated as follows. Appears to be allosterically activated by the binding of pArg-containing polypeptides to the pArg-binding pocket localized in the C-terminal domain of McsB. Catalyzes the specific phosphorylation of arginine residues in a large number of proteins. Is part of the bacterial stress response system. Protein arginine phosphorylation has a physiologically important role and is involved in the regulation of many critical cellular processes, such as protein homeostasis, motility, competence, and stringent and stress responses, by regulating gene expression and protein activity. The chain is Protein-arginine kinase from Bacillus licheniformis (strain ATCC 14580 / DSM 13 / JCM 2505 / CCUG 7422 / NBRC 12200 / NCIMB 9375 / NCTC 10341 / NRRL NRS-1264 / Gibson 46).